The following is a 273-amino-acid chain: Non-homologous end joining protein Ku (273 aa).

Residues 10–193 (AFGLVNVPVK…KVEIKPAELK (184 aa)) enclose the Ku domain. Residues 111–273 (FLEPDSKSSK…KANSNVPTPP (163 aa)) are sufficient for interaction with LigD.

This sequence belongs to the prokaryotic Ku family. In terms of assembly, homodimer. Interacts with LigD.

Its function is as follows. With LigD forms a non-homologous end joining (NHEJ) DNA repair enzyme, which repairs dsDNA breaks with reduced fidelity. Binds linear dsDNA with 5'- and 3'- overhangs but not closed circular dsDNA nor ssDNA. Recruits and stimulates the ligase activity of LigD. This Mycobacterium tuberculosis (strain CDC 1551 / Oshkosh) protein is Non-homologous end joining protein Ku (mku).